A 29-amino-acid chain; its full sequence is L-serine dehydratase, beta chain (29 aa).

It belongs to the iron-sulfur dependent L-serine dehydratase family. In terms of assembly, heterodimer of an alpha chain and a beta chain. [4Fe-4S] cluster is required as a cofactor.

It carries out the reaction L-serine = pyruvate + NH4(+). The protein operates within carbohydrate biosynthesis; gluconeogenesis. In Anaerotignum propionicum (Clostridium propionicum), this protein is L-serine dehydratase, beta chain.